A 173-amino-acid polypeptide reads, in one-letter code: Peptidoglycan-associated lipoprotein (173 aa).

Positions 1–21 are cleaved as a signal peptide; sequence MKSKKIFKILTLLLPMITTFS. Cys22 is lipidated: N-palmitoyl cysteine. A lipid anchor (S-diacylglycerol cysteine) is attached at Cys22. Residues 59–173 enclose the OmpA-like domain; the sequence is ETLEKLKKGN…KNRRSVIIYQ (115 aa).

This sequence belongs to the Pal lipoprotein family.

The protein resides in the cell outer membrane. The chain is Peptidoglycan-associated lipoprotein from Buchnera aphidicola subsp. Baizongia pistaciae (strain Bp).